The following is a 99-amino-acid chain: Large ribosomal subunit protein uL23 (99 aa).

This sequence belongs to the universal ribosomal protein uL23 family. As to quaternary structure, part of the 50S ribosomal subunit. Contacts protein L29, and trigger factor when it is bound to the ribosome.

One of the early assembly proteins it binds 23S rRNA. One of the proteins that surrounds the polypeptide exit tunnel on the outside of the ribosome. Forms the main docking site for trigger factor binding to the ribosome. In Xanthomonas axonopodis pv. citri (strain 306), this protein is Large ribosomal subunit protein uL23.